Reading from the N-terminus, the 620-residue chain is MALLQIAEPGQSPQPHQRRLAVGIDLGTTNSMVAALRSGRSEPLPDAQGNVILPSAVRYLEGRNEVGQAARDAASSDPLNTVLSVKRLMGRGLADVKQLGEQLPYRFVGGESHMPFIDTVQGPKSPVEVSADILKVLRERAEATLGGELVGAVITVPAYFDDAQRQATKDAARLAGLNVLRLLNEPTAAAVAYGLDQNAEGVVAIYDLGGGTFDISILRLTAGVFEVLATGGDTALGGDDFDHAIAGWIIEQAGLSSDLDPATQRALLQTACAAKEALTDADVVSVSHGAWHGELTRNAFEAMIEPLVARSLKACRRAVRDSGVELEEVSAVVMVGGSTRVPRVREAVGALFGRTPLTSIDPDQVVAIGAAIQADTLAGNRREGGELLLLDVIPLSLGLETMGGLMEKVIPRNTTIPVARAQEFTTYKDGQSAMMIHVLQGERELISDCRSLARFELRGIPAMVAGAAKIRVTFQVDADGLLSVAARELGSGVEASIQVKPSYGLTDGEIARMLKDSFEHAGSDKHARQLREHQVDGERLLEAVQGALDADGDRLLSSDERDAIEFQMQELRDLLAGTDGAAIEQQTKRLSQVTDAFAARRLDSTVKAALAGRNLNEIEE.

This sequence belongs to the heat shock protein 70 family.

Functionally, chaperone involved in the maturation of iron-sulfur cluster-containing proteins. Has a low intrinsic ATPase activity which is markedly stimulated by HscB. The protein is Chaperone protein HscA homolog of Pseudomonas putida (strain ATCC 47054 / DSM 6125 / CFBP 8728 / NCIMB 11950 / KT2440).